Here is a 100-residue protein sequence, read N- to C-terminus: Urease subunit gamma (100 aa).

Belongs to the urease gamma subunit family. Heterotrimer of UreA (gamma), UreB (beta) and UreC (alpha) subunits. Three heterotrimers associate to form the active enzyme.

Its subcellular location is the cytoplasm. It carries out the reaction urea + 2 H2O + H(+) = hydrogencarbonate + 2 NH4(+). The protein operates within nitrogen metabolism; urea degradation; CO(2) and NH(3) from urea (urease route): step 1/1. This Agrobacterium fabrum (strain C58 / ATCC 33970) (Agrobacterium tumefaciens (strain C58)) protein is Urease subunit gamma.